The sequence spans 463 residues: MGKEKTHINIVVIGHVDSGKSTTTGHLIYKCGGIDKRTIEKFEKEAAEMGKGSFKYAWVLDKLKAERERGITIDISLWKFETTKYYITIIDAPGHRDFIKNMITGTSQADCAVLIVAAGVGEFEAGISKNGQTREHALLAYTLGVKQLIVGVNKMDSTEPAYSEKRYDEIVKEVSAYIKKIGYNPATVPFVPISGWHGDNMLEPSPNMPWFKGWKVERKEGNASGVSLLEALDTILPPTRPTDKPLRLPLQDVYKIGGIGTVPVGRVETGILRPGMVVTFAPVNITTEVKSVEMHHEALSEALPGDNVGFNVKNVSVKDIRRGNVCGDSKADPPQEAAQFTSQVIILNHPGQISAGYSPVIDCHTAHIACKFAELKEKIDRRSGKKLEDNPKSLKSGDAAIVEMVPGKPMCVESFSQYPPLGRFAVRDMRQTVAVGVIKNVEKKSGGAGKVTKSAQKAQKAGK.

Residue Gly-2 is modified to N,N,N-trimethylglycine. The tr-type G domain occupies Lys-5–Thr-242. A G1 region spans residues Gly-14 to Ser-21. Asp-17, Ser-18, Gly-19, Lys-20, Ser-21, and Thr-22 together coordinate GTP. Asp-17 is a Mg(2+) binding site. At Lys-36 the chain carries N6,N6,N6-trimethyllysine; alternate. At Lys-36 the chain carries N6,N6-dimethyllysine; alternate. Lys-36 is subject to N6-methyllysine; alternate. Lys-55 carries the N6,N6,N6-trimethyllysine modification. Lys-55 carries the N6,N6-dimethyllysine modification. The tract at residues Gly-70–Asp-74 is G2. N6,N6,N6-trimethyllysine is present on Lys-79. A G3 region spans residues Asp-91 to Gly-94. Asn-153, Lys-154, and Asp-156 together coordinate GTP. A G4 region spans residues Asn-153–Asp-156. Phosphoserine is present on Ser-163. The residue at position 165 (Lys-165) is an N6,N6-dimethyllysine; alternate. Lys-165 is subject to N6-methyllysine; alternate. At Lys-165 the chain carries N6,N6,N6-trimethyllysine; alternate; by EEF1AKMT3. Lys-179 is subject to N6-acetyllysine. GTP contacts are provided by Ser-194, Gly-195, and Trp-196. The tract at residues Ser-194–Trp-196 is G5. Position 224 is a phosphoserine (Ser-224). Position 239 is a phosphothreonine (Thr-239). Glu-301 and Glu-374 each carry 5-glutamyl glycerylphosphorylethanolamine. Lys-439 is subject to N6-acetyllysine. The segment at Lys-444–Lys-463 is disordered.

The protein belongs to the TRAFAC class translation factor GTPase superfamily. Classic translation factor GTPase family. EF-Tu/EF-1A subfamily. Homodimer; arranged in a 'head to tail' dimer configuration. Post-translationally, trimethylated at Lys-165 by EEF1AKMT3. Mono-, di-, and trimethylated at Lys-36 by EEF1AKMT4; trimethylated form is predominant. Methylation by EEF1AKMT4 contributes to the fine-tuning of translation rates for a subset of tRNAs. Trimethylated at the N-terminus and dimethylated at Lys-55 by METTL13.

The protein localises to the endoplasmic reticulum membrane. The catalysed reaction is GTP + H2O = GDP + phosphate + H(+). Its function is as follows. Translation elongation factor that catalyzes the GTP-dependent binding of aminoacyl-tRNA (aa-tRNA) to the A-site of ribosomes during the elongation phase of protein synthesis. Base pairing between the mRNA codon and the aa-tRNA anticodon promotes GTP hydrolysis, releasing the aa-tRNA from EEF1A1 and allowing its accommodation into the ribosome. The growing protein chain is subsequently transferred from the P-site peptidyl tRNA to the A-site aa-tRNA, extending it by one amino acid through ribosome-catalyzed peptide bond formation. In Rattus norvegicus (Rat), this protein is Elongation factor 1-alpha 2 (Eef1a2).